Here is a 282-residue protein sequence, read N- to C-terminus: MADLQGKAVLTIAVPEAKADQIEAEILRLRAATTEAGSVQLEQFDRLEQVFLAPSSYDVIFSGHIALPAKSHADSALAKLAAALKPGGRLALRESLNSRNETALRSALTMGGFVNVQVSTSEHALEAHADKPVYEVGAAAPLKLSFAKKKQSGAAAPAAQVAEVWTIATDDFDDDDLLENDGDELLDAEDLALATTAPEGDDCEVGAGGKRRACKNCTCGRADAEAEQAAKPTLTGPLPASSCGNCYLGDAFRCASCPYLGMPAFKPGEKVTLSDRQLKADA.

Residues 1–140 (MADLQGKAVL…KPVYEVGAAA (140 aa)) are N-terminal SAM-like domain. The tract at residues 141-192 (PLKLSFAKKKQSGAAAPAAQVAEVWTIATDDFDDDDLLENDGDELLDAEDLA) is linker. Residues C203, C214, C217, and C219 each contribute to the [2Fe-2S] cluster site. The fe-S binding site A stretch occupies residues 203–219 (CEVGAGGKRRACKNCTC). Residues C243, C246, C254, and C257 each contribute to the [4Fe-4S] cluster site. Short sequence motifs (cx2C motif) lie at residues 243–246 (CGNC) and 254–257 (CASC). Positions 243–257 (CGNCYLGDAFRCASC) are fe-S binding site B.

The protein belongs to the anamorsin family. As to quaternary structure, monomer. [2Fe-2S] cluster is required as a cofactor. [4Fe-4S] cluster serves as cofactor.

It is found in the cytoplasm. Its subcellular location is the mitochondrion intermembrane space. Component of the cytosolic iron-sulfur (Fe-S) protein assembly (CIA) machinery. Required for the maturation of extramitochondrial Fe-S proteins. Part of an electron transfer chain functioning in an early step of cytosolic Fe-S biogenesis, facilitating the de novo assembly of a [4Fe-4S] cluster on the cytosolic Fe-S scaffold complex. Electrons are transferred from NADPH via a FAD- and FMN-containing diflavin oxidoreductase. Together with the diflavin oxidoreductase, also required for the assembly of the diferric tyrosyl radical cofactor of ribonucleotide reductase (RNR), probably by providing electrons for reduction during radical cofactor maturation in the catalytic small subunit. The polypeptide is Anamorsin homolog (Monosiga brevicollis (Choanoflagellate)).